Here is a 57-residue protein sequence, read N- to C-terminus: Large ribosomal subunit protein uL30 (57 aa).

The protein belongs to the universal ribosomal protein uL30 family. Part of the 50S ribosomal subunit.

This Buchnera aphidicola subsp. Cinara cedri (strain Cc) protein is Large ribosomal subunit protein uL30.